The chain runs to 253 residues: Complement C1q subcomponent subunit B (253 aa).

The signal sequence occupies residues M1–A25. Q26 carries the pyrrolidone carboxylic acid modification. A Collagen-like domain is found at C29–G112. P33, P36, P39, P51, and P54 each carry 4-hydroxyproline. A disordered region spans residues I35–G115. A 5-hydroxylysine mark is found at K57 and K60. P63 bears the 4-hydroxyproline mark. A 5-hydroxylysine modification is found at K75. A compositionally biased stretch (low complexity) spans P78 to K96. 2 positions are modified to 4-hydroxyproline: P81 and P84. 5-hydroxylysine is present on residues K90 and K96. Position 99 is a 4-hydroxyproline (P99). K108 carries the post-translational modification 5-hydroxylysine. Positions G115–A253 constitute a C1q domain. The cysteines at positions 179 and 198 are disulfide-linked. 3 residues coordinate Ca(2+): D199, Y200, and Q206.

As to quaternary structure, core component of the complement C1 complex, a calcium-dependent complex composed of 1 molecule of the C1Q subcomplex, 2 molecules of C1R and 2 molecules of C1S. The C1Q subcomplex is composed 18 subunits: 3 chains of C1QA, C1QB, and C1QC trimerize to form 6 collagen-like triple helices connected to six globular ligand-recognition modules (C1q domain). Post-translationally, hydroxylated on lysine and proline residues. Hydroxylated lysine residues can be glycosylated. Mouse C1Q contains up to 64.0 hydroxylysine-galactosylglucose residues. Total percentage hydroxylysine residues glycosylated is 95.1%. Contains no hydroxylysine-monosaccharides. As to expression, highest expression in thioglycolate-activated peritoneal macrophages. Also found in spleen, thymus and heart. Very weak expression liver, kidney, lung and intestine.

The protein localises to the secreted. The protein resides in the cell surface. With respect to regulation, the C1Q subcomplex is inhibited by sulfated molecules, such as triterpenoid sulfates, heparan sulfate, or chondroitin sulfates. Its function is as follows. Core component of the complement C1 complex, a multiprotein complex that initiates the classical pathway of the complement system, a cascade of proteins that leads to phagocytosis and breakdown of pathogens and signaling that strengthens the adaptive immune system. The classical complement pathway is initiated by the C1Q subcomplex of the C1 complex, which specifically binds IgG or IgM immunoglobulins complexed with antigens, forming antigen-antibody complexes on the surface of pathogens: C1QA, together with C1QB and C1QC, specifically recognizes and binds the Fc regions of IgG or IgM via its C1q domain. Immunoglobulin-binding activates the proenzyme C1R, which cleaves C1S, initiating the proteolytic cascade of the complement system. The C1Q subcomplex is activated by a hexamer of IgG complexed with antigens, while it is activated by a pentameric IgM. The C1Q subcomplex also recognizes and binds phosphatidylserine exposed on the surface of cells undergoing programmed cell death, possibly promoting activation of the complement system. The sequence is that of Complement C1q subcomponent subunit B from Mus musculus (Mouse).